A 256-amino-acid polypeptide reads, in one-letter code: tRNA pseudouridine synthase A (256 aa).

The Nucleophile role is filled by aspartate 52. Tyrosine 111 is a binding site for substrate.

Belongs to the tRNA pseudouridine synthase TruA family. As to quaternary structure, homodimer.

The catalysed reaction is uridine(38/39/40) in tRNA = pseudouridine(38/39/40) in tRNA. Formation of pseudouridine at positions 38, 39 and 40 in the anticodon stem and loop of transfer RNAs. This Paramagnetospirillum magneticum (strain ATCC 700264 / AMB-1) (Magnetospirillum magneticum) protein is tRNA pseudouridine synthase A.